Here is a 239-residue protein sequence, read N- to C-terminus: Aldehyde dehydrogenase, dimeric NADP-preferring (239 aa).

Cysteine 30 is an active-site residue.

Belongs to the aldehyde dehydrogenase family. In terms of assembly, homodimer.

It is found in the cytoplasm. The catalysed reaction is an aldehyde + NAD(+) + H2O = a carboxylate + NADH + 2 H(+). It carries out the reaction octanal + NAD(+) + H2O = octanoate + NADH + 2 H(+). In terms of biological role, ALDHs play a major role in the detoxification of alcohol-derived acetaldehyde. They are involved in the metabolism of corticosteroids, biogenic amines, neurotransmitters, and lipid peroxidation. Oxidizes medium and long chain aldehydes into non-toxic fatty acids. Preferentially oxidizes aromatic aldehyde substrates. Comprises about 50 percent of corneal epithelial soluble proteins. May play a role in preventing corneal damage caused by ultraviolet light. The protein is Aldehyde dehydrogenase, dimeric NADP-preferring (ALDH3A1) of Bos taurus (Bovine).